The primary structure comprises 121 residues: Basic phospholipase A2 caudoxin (121 aa).

Disulfide bonds link C25–C114, C27–C43, C42–C94, C48–C121, C49–C87, C56–C80, and C74–C85. Positions 26, 28, and 30 each coordinate Ca(2+). H46 is a catalytic residue. Residue D47 coordinates Ca(2+). The active site involves D88.

It belongs to the phospholipase A2 family. Group II subfamily. D49 sub-subfamily. As to quaternary structure, monomer. Ca(2+) is required as a cofactor. In terms of tissue distribution, expressed by the venom gland.

Its subcellular location is the secreted. The enzyme catalyses a 1,2-diacyl-sn-glycero-3-phosphocholine + H2O = a 1-acyl-sn-glycero-3-phosphocholine + a fatty acid + H(+). Functionally, snake venom phospholipase A2 (PLA2) that shows anticoagulant activity and presynaptic neurotoxicity. Acts as an anticoagulant toxin by inhibiting prothrombinase complex formation. Shows about 50% of the prothrombinase complex inhibition compared to CM-IV of N.nigricollis venom. Acts as a neurotoxin by inhibiting neuromuscular transmission by blocking acetylcholine release from the nerve termini. PLA2 catalyzes the calcium-dependent hydrolysis of the 2-acyl groups in 3-sn-phosphoglycerides. The chain is Basic phospholipase A2 caudoxin from Bitis caudalis (Horned adder).